Consider the following 704-residue polypeptide: Fibulin-1 (704 aa).

The signal sequence occupies residues 1 to 25 (MDKLRGARPLRLLLLLLALLPALRG). 35 disulfides stabilise this stretch: Cys33–Cys59, Cys34–Cys66, Cys47–Cys67, Cys76–Cys107, Cys89–Cys108, Cys110–Cys134, Cys111–Cys141, Cys124–Cys142, Cys181–Cys191, Cys187–Cys200, Cys202–Cys215, Cys221–Cys234, Cys228–Cys243, Cys249–Cys261, Cys267–Cys280, Cys274–Cys289, Cys295–Cys307, Cys313–Cys326, Cys320–Cys335, Cys342–Cys355, Cys361–Cys374, Cys368–Cys383, Cys385–Cys398, Cys404–Cys416, Cys412–Cys425, Cys427–Cys440, Cys446–Cys455, Cys451–Cys464, Cys466–Cys480, Cys486–Cys499, Cys495–Cys508, Cys510–Cys524, Cys530–Cys543, Cys537–Cys552, and Cys557–Cys578. Anaphylatoxin-like domains follow at residues 33–74 (CCDK…LEEH), 75–109 (YCSDGIEFASVHEECDSHNGENSTCEAEYFKKCCY), and 110–142 (CCLLGKTAQVQGQSCEPNLKIGYQCGIVFRACC). A glycan (N-linked (GlcNAc...) asparagine) is linked at Asn96. The EGF-like 1 domain maps to 177–216 (LHDGCRGGGPCSQQCRDTGSSYVCSCFVGYQLQPDGVNCE). Residues 217-262 (DINECITGTHSCGIGQTCVNTLGSFRCQRDTSCGTGYELTDDSRCK) form the EGF-like 2; calcium-binding domain. The 46-residue stretch at 263-308 (DIDECETGTHNCPPDFICQNTPGSFRCRPKLQCMNGFIQDALGNCI) folds into the EGF-like 3; calcium-binding domain. An EGF-like 4; calcium-binding domain is found at 309-356 (DINECLSTNMPCPAGQICINTDGSYTCQRISPSCGRGYHLNEDGTRCV). In terms of domain architecture, EGF-like 5; calcium-binding spans 357–399 (DVDECSSSDQPCGEGHVCINGPGNYRCECKSGYSFDVISRTCI). The interval 357–441 (DVDECSSSDQ…KLSSDGRSCE (85 aa)) is self-association and FN1-binding. Residues 400–441 (DINECRRYPGRLCAHKCENTPGSYYCTCTMGFKLSSDGRSCE) form the EGF-like 6; calcium-binding domain. The region spanning 442-481 (DLNECESSPCSQECANVYGSYQCYCRRGFQLSDIDGISCE) is the EGF-like 7; calcium-binding domain. Residues 482–525 (DIDECALPTGGHICSFRCINIPGSFQCTCPSTGYRLAPNARNCQ) enclose the EGF-like 8; calcium-binding domain. One can recognise an EGF-like 9; calcium-binding domain in the interval 526 to 579 (DIDECVAETHNCSFNETCFNIQGGFRCLSLECPENYRKSGDTVRLEKTDTIRCI). N-linked (GlcNAc...) asparagine glycosylation is found at Asn536 and Asn540.

This sequence belongs to the fibulin family. In terms of assembly, homomultimerizes and interacts with various extracellular matrix components.

It is found in the secreted. Its subcellular location is the extracellular space. The protein resides in the extracellular matrix. Incorporated into fibronectin-containing matrix fibers. May play a role in cell adhesion and migration along protein fibers within the extracellular matrix (ECM). Could be important for certain developmental processes and contribute to the supramolecular organization of ECM architecture, in particular to those of basement membranes. The protein is Fibulin-1 (FBLN1) of Gallus gallus (Chicken).